Consider the following 1766-residue polypeptide: E3 ubiquitin-protein ligase listerin (1766 aa).

The segment covering 1–11 (MGGKNKQRTKG) has biased composition (basic residues). Positions 1 to 20 (MGGKNKQRTKGNVRPSSSGR) are disordered. 5 HEAT repeats span residues 100 to 138 (KGVL…KVKK), 193 to 231 (VLQD…SLLA), 292 to 329 (AEAP…TIED), 335 to 372 (NARK…KVPP), and 512 to 549 (EKTL…DEDE). Residues 529-567 (KTATKPNNRKSLKVKFSDEDESERNTENGKITEVRSNSD) are disordered. The span at 551–566 (ERNTENGKITEVRSNS) shows a compositional bias: basic and acidic residues. HEAT repeat units follow at residues 606–644 (EQHL…ESQE), 672–710 (KDMH…KWIV), 916–953 (QVLI…NRTE), 1184–1227 (HLLP…MIRY), 1314–1355 (GIHN…YISK), and 1406–1447 (SKLM…TQEL). An RING-type zinc finger spans residues 1715–1762 (CMICFSVIHGSNYSLPKKACRTCKKKFHSACLYKWFTSSNKSTCPLCR).

Belongs to the LTN1 family. As to quaternary structure, component of the ribosome quality control complex (RQC), composed of at least the E3 ubiquitin ligase LTN1 and NEMF associated with the 60S ribosomal subunit. The complex probably also contains TCF25 as well as VCP/p97 and its ubiquitin-binding cofactors.

The protein localises to the cytoplasm. It localises to the cytosol. It catalyses the reaction S-ubiquitinyl-[E2 ubiquitin-conjugating enzyme]-L-cysteine + [acceptor protein]-L-lysine = [E2 ubiquitin-conjugating enzyme]-L-cysteine + N(6)-ubiquitinyl-[acceptor protein]-L-lysine.. The protein operates within protein modification; protein ubiquitination. E3 ubiquitin-protein ligase component of the ribosome quality control complex (RQC), a ribosome-associated complex that mediates ubiquitination and extraction of incompletely synthesized nascent chains for proteasomal degradation. Within the RQC complex, LTN1 is recruited to stalled 60S ribosomal subunits by NEMF and mediates ubiquitination of stalled nascent chains. Ubiquitination leads to VCP/p97 recruitment for extraction and degradation of the incomplete translation product. The chain is E3 ubiquitin-protein ligase listerin (LTN1) from Gallus gallus (Chicken).